Here is a 508-residue protein sequence, read N- to C-terminus: Gasdermin-C (508 aa).

The segment at 1-257 (MPSMLERISK…VGYCAARSEG (257 aa)) is triggers pyroptosis.

It belongs to the gasdermin family. In terms of assembly, homooligomer; homooligomeric ring-shaped pore complex containing 27-28 subunits when inserted in the membrane. Cleavage by CASP8 relieves autoinhibition by releasing the N-terminal moiety (Gasdermin-C, N-terminal) that initiates pyroptosis. The cleavage site is unclear. According to a publication, it takes place after Asp-240 in response to alpha-ketoglutarate. Another paper reports cleavage by CASP8 after Asp-365. Post-translationally, palmitoylated. In terms of tissue distribution, expressed mainly in trachea and spleen. In the esophagus, expressed in differentiating cells and probably in differentiated cells. Also detected in gastric epithelium.

The protein resides in the cytoplasm. It localises to the cytosol. The protein localises to the cell membrane. The full-length protein before cleavage is inactive: intramolecular interactions between N- and C-terminal domains mediate autoinhibition in the absence of activation signal. The intrinsic pyroptosis-inducing activity is carried by the released N-terminal moiety (Gasdermin-C, N-terminal) following cleavage by caspase CASP8. This form constitutes the precursor of the pore-forming protein: upon cleavage, the released N-terminal moiety (Gasdermin-C, N-terminal) binds to membranes and forms pores, triggering pyroptosis. In terms of biological role, pore-forming protein that causes membrane permeabilization and pyroptosis. Produced by the cleavage of gasdermin-C by caspase CASP8 in response to death signals. After cleavage, moves to the plasma membrane where it strongly binds to membrane inner leaflet lipids. Homooligomerizes within the membrane and forms pores of 10-15 nanometers (nm) of inner diameter, triggering pyroptosis. This is Gasdermin-C from Homo sapiens (Human).